Reading from the N-terminus, the 276-residue chain is Myoblast determination protein 1 homolog 1 (276 aa).

Residues 84 to 135 form the bHLH domain; sequence DRRKAATMRERRRLSKVNDAFETLKRCTSTNPNQRLPKVDILRNAISYIESL. The tract at residues 228–253 is disordered; it reads CPAVQDGSEGSSPCSPGDGSIASENG.

Efficient DNA binding requires dimerization with another bHLH protein.

Its subcellular location is the nucleus. May act as a transcriptional activator that promotes transcription of muscle-specific target genes and plays a role in muscle differentiation. The sequence is that of Myoblast determination protein 1 homolog 1 (myod1) from Oncorhynchus mykiss (Rainbow trout).